The chain runs to 378 residues: MAKKRIVVMYGGKADEHSISCISAASALRALDTDKFEAIPVGITKDGKWIVNGENPLGWSLDEGLPTVEKTPGAKDVVLEVALGQDGFFAREDDGTMTPFGHVDAVFPVLHGPYGEDGTIQGLFEMMGVPYVGCGVLASAACMDKHYTKVLLAAAGIPVAPGITLDARSFDKASEFKTDADAIMAQVSEAGLQYPLFVKPSRAGSSFGVTKVEHEGDAAELAAAVYEASRHDWRILVEQGIDAREIECAVLCPKAGEAPQASWPGEIVLDKRAEGDDQFYDFDSKYMDAAASHVEVPANLPEETLNLVRETAKKAFVAVDGAGLSRVDTFVTKDGKVMVNEINTMPGFTSISMYPKAWEATGVRYTDLITKLIEGVLR.

Residues 149 to 374 (KVLLAAAGIP…YTDLITKLIE (226 aa)) enclose the ATP-grasp domain. 189–247 (EAGLQYPLFVKPSRAGSSFGVTKVEHEGDAAELAAAVYEASRHDWRILVEQGIDAREIE) is an ATP binding site. The Mg(2+) site is built by Asp-328, Glu-341, and Asn-343.

It belongs to the D-alanine--D-alanine ligase family. Requires Mg(2+) as cofactor. It depends on Mn(2+) as a cofactor.

It localises to the cytoplasm. It catalyses the reaction 2 D-alanine + ATP = D-alanyl-D-alanine + ADP + phosphate + H(+). The protein operates within cell wall biogenesis; peptidoglycan biosynthesis. Its function is as follows. Cell wall formation. This Bifidobacterium adolescentis (strain ATCC 15703 / DSM 20083 / NCTC 11814 / E194a) protein is D-alanine--D-alanine ligase.